The following is a 103-amino-acid chain: Small ribosomal subunit protein uS10 (103 aa).

Belongs to the universal ribosomal protein uS10 family. Part of the 30S ribosomal subunit.

In terms of biological role, involved in the binding of tRNA to the ribosomes. In Escherichia coli O127:H6 (strain E2348/69 / EPEC), this protein is Small ribosomal subunit protein uS10.